The primary structure comprises 411 residues: Protrudin (411 aa).

The interval 1–27 (MQTSEREGSGPELSPSVMPEAPLESPP) is disordered. Topologically, residues 1 to 66 (MQTSEREGSG…AGDGVRYLLR (66 aa)) are cytoplasmic. The interval 1–92 (MQTSEREGSG…LFLTLNEGAW (92 aa)) is sufficient for homooligomerization. The segment at 1-205 (MQTSEREGSG…LYLLPLCWVL (205 aa)) is sufficient for localization to endoplasmic reticulum tubular network and for interactions with REEP1, REEP5, ATL1, ATL2, ATL3 and SPAST. The necessary for interaction with RAB11A and function in neurite outgrowth stretch occupies residues 51–64 (LEPLKDAGDGVRYL). A helical transmembrane segment spans residues 67 to 87 (WQMPLCSLLTCLGLNVLFLTL). Residue Asn88 is a topological domain, lumenal. Residues 89-109 (EGAWYSVGALMISVPALLGYL) form a helical membrane-spanning segment. At 110 to 187 (QEVCRARLPE…NPVVSSQFYG (78 aa)) the chain is on the cytoplasmic side. Residues 188 to 208 (ALLGTICMLYLLPLCWVLTLL) constitute an intramembrane region (helical). The Cytoplasmic segment spans residues 209–411 (NSTLFLGNVE…CASCNQTLSK (203 aa)). Residues 234–286 (MNPKQEEHAFESPPPPDVGGKGGLMDSTPALTPTEDLTPGSVEEAEEAEPDEE) form a disordered region. The tract at residues 271–361 (TPGSVEEAEE…GCSATFSVLK (91 aa)) is necessary for interaction with KIF5A. Over residues 276–286 (EEAEEAEPDEE) the composition is skewed to acidic residues. Residues 286–292 (EFKDAIE) are necessary for interaction with VAPA. The FYVE-type zinc finger occupies 344 to 410 (TNNFGNCTGC…VCASCNQTLS (67 aa)). Zn(2+) is bound by residues Cys350, Cys353, Cys366, Cys369, Cys374, Cys377, Cys402, and Cys405.

As to quaternary structure, can form homooligomers (monomers, dimers and tetramers). Interacts with RAB11A (GDP-bound form); regulates RAB11A. Interacts with FKBP8; may negatively regulate ZFYVE27 phosphorylation. Interacts with VAPA (via MSP domain); may regulate ZFYVE27 retention in the endoplasmic reticulum and its function in cell projections formation. Interacts with VAPB (via MSP domain). Interacts with RAB11B (GDP-bound form), REEP1, REEP5, ATL1, ATL2, ATL3, SPAST, SURF4, KIF5A, KIF5B, KIF5C and RTN3. Phosphorylated. Phosphorylation is induced by NGF through the MAPK/ERK pathway and modulates interaction with RAB11A.

It is found in the recycling endosome membrane. Its subcellular location is the endoplasmic reticulum membrane. The protein localises to the cell projection. The protein resides in the growth cone membrane. Its function is as follows. Key regulator of RAB11-dependent vesicular trafficking during neurite extension through polarized membrane transport. Promotes axonal elongation and contributes to the establishment of neuronal cell polarity. Involved in nerve growth factor-induced neurite formation in VAPA-dependent manner. Contributes to both the formation and stabilization of the tubular ER network. Involved in ER morphogenesis by regulating the sheet-to-tubule balance and possibly the density of tubule interconnections. Acts as an adapter protein that facilitates the interaction of KIF5A with VAPA, VAPB, SURF4, RAB11A, RAB11B and RTN3 and the ZFYVE27-KIF5A complex contributes to the transport of these proteins in neurons. Can induce formation of neurite-like membrane protrusions in non-neuronal cells in a KIF5A/B-dependent manner. This chain is Protrudin (ZFYVE27), found in Pongo abelii (Sumatran orangutan).